The primary structure comprises 504 residues: Glycine--tRNA ligase (504 aa).

Residues R99 and E189 each coordinate substrate. ATP contacts are provided by residues 221–223 (RNE), 231–236 (FRVREL), 306–307 (EI), and 365–368 (GVDR). 236 to 240 (LEQME) provides a ligand contact to substrate. Residue 361–365 (EPSAG) participates in substrate binding.

It belongs to the class-II aminoacyl-tRNA synthetase family. In terms of assembly, homodimer.

Its subcellular location is the cytoplasm. The enzyme catalyses tRNA(Gly) + glycine + ATP = glycyl-tRNA(Gly) + AMP + diphosphate. Functionally, catalyzes the attachment of glycine to tRNA(Gly). The polypeptide is Glycine--tRNA ligase (Deinococcus geothermalis (strain DSM 11300 / CIP 105573 / AG-3a)).